A 351-amino-acid chain; its full sequence is Photosystem II D2 protein 2 (351 aa).

Residues 39-59 traverse the membrane as a helical segment; the sequence is CAFLSIGGWFTGTTFVTSWYT. Histidine 116 contributes to the chlorophyll a binding site. A helical transmembrane segment spans residues 123-139; that stretch reads GFMLRQFEIARLVNVRP. Residues glutamine 128 and asparagine 141 each coordinate pheophytin a. Residues 151–164 traverse the membrane as a helical segment; sequence VFVSVFLMYPLGQS. Residue histidine 196 participates in chlorophyll a binding. Residues 206–226 form a helical membrane-spanning segment; sequence GALLCAIHGATVENTLFEDTK. Residues histidine 213 and phenylalanine 260 each coordinate a plastoquinone. Histidine 213 contacts Fe cation. Histidine 267 is a binding site for Fe cation. Residues 277–293 traverse the membrane as a helical segment; the sequence is GLWASAIGLVGIALNMR.

It belongs to the reaction center PufL/M/PsbA/D family. In terms of assembly, PSII is composed of 1 copy each of membrane proteins PsbA, PsbB, PsbC, PsbD, PsbE, PsbF, PsbH, PsbI, PsbJ, PsbK, PsbL, PsbM, PsbT, PsbX, PsbY, PsbZ, Psb30/Ycf12, peripheral proteins PsbO, CyanoQ (PsbQ), PsbU, PsbV and a large number of cofactors. It forms dimeric complexes. The D1/D2 heterodimer binds P680, chlorophylls that are the primary electron donor of PSII, and subsequent electron acceptors. It shares a non-heme iron and each subunit binds pheophytin, quinone, additional chlorophylls, carotenoids and lipids. There is also a Cl(-1) ion associated with D1 and D2, which is required for oxygen evolution. The PSII complex binds additional chlorophylls, carotenoids and specific lipids. serves as cofactor.

The protein localises to the cellular thylakoid membrane. It carries out the reaction 2 a plastoquinone + 4 hnu + 2 H2O = 2 a plastoquinol + O2. Its function is as follows. Photosystem II (PSII) is a light-driven water:plastoquinone oxidoreductase that uses light energy to abstract electrons from H(2)O, generating O(2) and a proton gradient subsequently used for ATP formation. It consists of a core antenna complex that captures photons, and an electron transfer chain that converts photonic excitation into a charge separation. The D1/D2 (PsbA/PsbD) reaction center heterodimer binds P680, the primary electron donor of PSII as well as several subsequent electron acceptors. D2 is needed for assembly of a stable PSII complex. This Acaryochloris marina (strain MBIC 11017) protein is Photosystem II D2 protein 2.